Reading from the N-terminus, the 209-residue chain is MTLSVNLCSGAEALPTEQEAASLAVECIEPLAQLPHDLPIFLVGMMGAGKTTIGRGLARALGREFIDLDHELEARCGVRVPVIFEIEGEAGFRKRESTALQECTQRRGIILATGGGAVLAEENRRLLRERGIVLYLRASVDELFRRTSRDRNRPLLATADPRGTLNDLMIKREPLYKEVADLVIETGAMPITTLIKAILPKLQAYEKKL.

47-52 serves as a coordination point for ATP; the sequence is GAGKTT. Residue threonine 51 participates in Mg(2+) binding. The substrate site is built by aspartate 69, arginine 93, and glycine 115. Position 153 (arginine 153) interacts with ATP. Arginine 172 contributes to the substrate binding site.

It belongs to the shikimate kinase family. Monomer. The cofactor is Mg(2+).

Its subcellular location is the cytoplasm. It catalyses the reaction shikimate + ATP = 3-phosphoshikimate + ADP + H(+). The protein operates within metabolic intermediate biosynthesis; chorismate biosynthesis; chorismate from D-erythrose 4-phosphate and phosphoenolpyruvate: step 5/7. Its function is as follows. Catalyzes the specific phosphorylation of the 3-hydroxyl group of shikimic acid using ATP as a cosubstrate. This is Shikimate kinase from Bordetella avium (strain 197N).